The chain runs to 268 residues: MYKDIKVDPAQLEAALDARLKIRAGFDKPTAGMAAGMTQVNMISVPRDWAYDFLLYAHRNPQSCPVLDVLEEGIYATKLAADSDIRTDFPRYRIWKDGEMVDEVTDAREIYNAHPDLVTFLIGCSFSFETALQEAGIEVRHIHDDTNVPMYLSNIKCEPAGRISGNMVVSMRPIPSHQISEAVKITARMPSVHGAPVHIGHPESLGIKDVNKPDFGDASRIEAGEIPVFWACGVTPQAAVMNSKIPFAISHAPGYMFITDIPDRAWMG.

Belongs to the D-glutamate cyclase family.

This Acinetobacter baumannii (strain AYE) protein is Putative hydro-lyase ABAYE2440.